Here is a 210-residue protein sequence, read N- to C-terminus: MVRGKIEMKKIENATSRQVTFSKRRNGLLKKAYELSVLCDAQLSLIIFSQRGRLYEFSSSDMQKTIERYRKYTKDHETSNHDSQIHLQQLKQEASHMITKIELLEFHKRKLLGQGIASCSLEELQEIDSQLQRSLGKVRERKAQLFKEQLEKLKAKEKQLLEENVKLHQKNVINPWRGSSTDQQQEKYKVIDLNLEVETDLFIGLPNRNC.

In terms of domain architecture, MADS-box spans 1–61; sequence MVRGKIEMKK…GRLYEFSSSD (61 aa). Residues 87 to 177 form the K-box domain; that stretch reads LQQLKQEASH…HQKNVINPWR (91 aa).

As to expression, expressed in quiescent center (QC) cells of root tips. Expressed at the base of the petiole of cotyledons and leaves, in flower buds, petals, sepals and abscission zone of flowers and siliques.

It is found in the nucleus. Functionally, MADS-box transcription factor that acts with AGL71 and AGL72 in the control of flowering time. Promotes flowering at the shoot apical and axillary meristems. Seems to act through a gibberellin-dependent pathway. Interacts genetically with SOC1 and its expression is directly regulated by SOC1. Plays a role in controlling flower organ senescence and abscission by repressing ethylene responses and regulating the expression of BOP2 and IDA. The sequence is that of MADS-box protein AGL42 (AGL42) from Arabidopsis thaliana (Mouse-ear cress).